A 187-amino-acid polypeptide reads, in one-letter code: MNLTNHFLVAMPGMKDPYFQHSVIYICEHNEEGAMGLMINAPIDITVGKMLEQVDVQPVHPQLNTSSLTKPVYNGGPVAEDRGFILHRPKDFYESSLQMTEQISVTTSKDILTVLGTEAEPSSYIVALGYSGWSAGQLEAELAENSWLTVEANPDIIFDTPIAMRWQKAVQMLGIHASQLSDQAGHA.

This sequence belongs to the UPF0301 (AlgH) family.

In Vibrio vulnificus (strain YJ016), this protein is UPF0301 protein VV2869.